A 125-amino-acid chain; its full sequence is Small ribosomal subunit protein uS13 (125 aa).

The interval 90 to 125 (QRHRKGLPVRGQRTKTNARTRKGPKRTVAGKKKATK) is disordered.

The protein belongs to the universal ribosomal protein uS13 family. Part of the 30S ribosomal subunit. Forms a loose heterodimer with protein S19. Forms two bridges to the 50S subunit in the 70S ribosome.

Functionally, located at the top of the head of the 30S subunit, it contacts several helices of the 16S rRNA. In the 70S ribosome it contacts the 23S rRNA (bridge B1a) and protein L5 of the 50S subunit (bridge B1b), connecting the 2 subunits; these bridges are implicated in subunit movement. Contacts the tRNAs in the A and P-sites. This chain is Small ribosomal subunit protein uS13, found in Bifidobacterium longum subsp. infantis (strain ATCC 15697 / DSM 20088 / JCM 1222 / NCTC 11817 / S12).